Reading from the N-terminus, the 109-residue chain is Fluoride-specific ion channel FluC 1 (109 aa).

4 helical membrane-spanning segments follow: residues 1–21 (MVIVYLAIACGFGALVRYFFS), 29–49 (LPLGTLIANLLGCFLIGVFYN), 55–75 (EVYAILATGFCGGLTTFSTLN), and 87–107 (VFYSYLILTYLGGLVAIFLGI). Na(+) is bound by residues Gly-66 and Thr-69.

Belongs to the fluoride channel Fluc/FEX (TC 1.A.43) family.

The protein localises to the cell membrane. It carries out the reaction fluoride(in) = fluoride(out). Na(+) is not transported, but it plays an essential structural role and its presence is essential for fluoride channel function. Fluoride-specific ion channel. Important for reducing fluoride concentration in the cell, thus reducing its toxicity. The chain is Fluoride-specific ion channel FluC 1 from Streptococcus pneumoniae (strain ATCC BAA-255 / R6).